Consider the following 600-residue polypeptide: Gamma-terpinene synthase, chloroplastic (600 aa).

A chloroplast-targeting transit peptide spans 1-40; sequence MALNLLSSLPAACNFTRLSLPLSSKVNGFVPPITQVQYPM. Positions 353, 357, 498, and 506 each coordinate Mg(2+). Residues 353–357 carry the DDXXD motif motif; that stretch reads DDVYD.

This sequence belongs to the terpene synthase family. It depends on Mn(2+) as a cofactor. The cofactor is Mg(2+).

It localises to the plastid. Its subcellular location is the chloroplast. It carries out the reaction (2E)-geranyl diphosphate = gamma-terpinene + diphosphate. The protein operates within secondary metabolite biosynthesis; terpenoid biosynthesis. Inhibited by 100 mM KCl. Monoterpene synthase which catalyzes the conversion of geranyl diphosphate to gamma-terpinene and the minor products limonene, alpha-pinene, beta-pinene, alpha-terpinolene, alpha-thujene, alpha-terpinene, myrcene and sabinene. The sequence is that of Gamma-terpinene synthase, chloroplastic from Citrus limon (Lemon).